A 148-amino-acid polypeptide reads, in one-letter code: MELILLEKVANLGNLGDKVKVKAGYGRNFLLPFGKATVANAANLAAFEERRAELEKAAADRKSSAESRAAQLAELEVTITATAGDEGKLFGSIGTHDIADALTASGVEVAKAEVRLPNGTIRQVGEYDVAVHLHSDVEATVRVVVVAA.

Belongs to the bacterial ribosomal protein bL9 family.

In terms of biological role, binds to the 23S rRNA. This Pseudomonas putida (strain W619) protein is Large ribosomal subunit protein bL9.